The chain runs to 307 residues: Protoheme IX farnesyltransferase (307 aa).

Helical transmembrane passes span 32 to 52 (MGIV…ALHF), 65 to 85 (FFTI…NNYI), 108 to 128 (PGFA…FLLL), 131 to 151 (PMAV…YSLW), 158 to 178 (LNTV…WAAI), 186 to 206 (IAWM…LALA), 251 to 271 (LGIT…VLGF), and 287 to 307 (FVYS…VTFF).

Belongs to the UbiA prenyltransferase family. Protoheme IX farnesyltransferase subfamily. As to quaternary structure, interacts with CtaA.

The protein resides in the cell membrane. The catalysed reaction is heme b + (2E,6E)-farnesyl diphosphate + H2O = Fe(II)-heme o + diphosphate. Its pathway is porphyrin-containing compound metabolism; heme O biosynthesis; heme O from protoheme: step 1/1. Converts heme B (protoheme IX) to heme O by substitution of the vinyl group on carbon 2 of heme B porphyrin ring with a hydroxyethyl farnesyl side group. The protein is Protoheme IX farnesyltransferase of Bacillus anthracis (strain A0248).